A 157-amino-acid polypeptide reads, in one-letter code: 2-C-methyl-D-erythritol 2,4-cyclodiphosphate synthase (157 aa).

A divalent metal cation contacts are provided by aspartate 8 and histidine 10. Residues 8-10 and 34-35 each bind 4-CDP-2-C-methyl-D-erythritol 2-phosphate; these read DVH and HS. Position 42 (histidine 42) interacts with a divalent metal cation. Residues 56-58, 61-65, 100-106, 132-135, phenylalanine 139, and arginine 142 contribute to the 4-CDP-2-C-methyl-D-erythritol 2-phosphate site; these read DIG, FPDTD, AQAPKMA, and TTTE.

The protein belongs to the IspF family. Homotrimer. Requires a divalent metal cation as cofactor.

The enzyme catalyses 4-CDP-2-C-methyl-D-erythritol 2-phosphate = 2-C-methyl-D-erythritol 2,4-cyclic diphosphate + CMP. It functions in the pathway isoprenoid biosynthesis; isopentenyl diphosphate biosynthesis via DXP pathway; isopentenyl diphosphate from 1-deoxy-D-xylulose 5-phosphate: step 4/6. In terms of biological role, involved in the biosynthesis of isopentenyl diphosphate (IPP) and dimethylallyl diphosphate (DMAPP), two major building blocks of isoprenoid compounds. Catalyzes the conversion of 4-diphosphocytidyl-2-C-methyl-D-erythritol 2-phosphate (CDP-ME2P) to 2-C-methyl-D-erythritol 2,4-cyclodiphosphate (ME-CPP) with a corresponding release of cytidine 5-monophosphate (CMP). The protein is 2-C-methyl-D-erythritol 2,4-cyclodiphosphate synthase of Pseudomonas syringae pv. tomato (strain ATCC BAA-871 / DC3000).